The primary structure comprises 98 residues: Large ribosomal subunit protein uL23 (98 aa).

It belongs to the universal ribosomal protein uL23 family. As to quaternary structure, part of the 50S ribosomal subunit. Contacts protein L29, and trigger factor when it is bound to the ribosome.

Its function is as follows. One of the early assembly proteins it binds 23S rRNA. One of the proteins that surrounds the polypeptide exit tunnel on the outside of the ribosome. Forms the main docking site for trigger factor binding to the ribosome. The chain is Large ribosomal subunit protein uL23 from Teredinibacter turnerae (strain ATCC 39867 / T7901).